Consider the following 837-residue polypeptide: V-type proton ATPase 116 kDa subunit a 1 (837 aa).

Residues 1–388 are Cytoplasmic-facing; the sequence is MGELFRSEEM…DAYGIGSYRE (388 aa). A helical transmembrane segment spans residues 389–407; the sequence is INPAPYTIITFPFLFAVMF. Topologically, residues 408–409 are vacuolar; that stretch reads GD. Residues 410–426 form a helical membrane-spanning segment; sequence FGHGILMTLFAVWMVVR. The Cytoplasmic portion of the chain corresponds to 427–441; sequence ESRILSQKIDNELFT. Residues 442-471 traverse the membrane as a helical segment; the sequence is MMFSGRYIILLMGLFSIYTGLIYNDCFSKA. The Vacuolar portion of the chain corresponds to 472-534; sequence LNLFGSSWSV…ATNKLTFLNS (63 aa). A helical transmembrane segment spans residues 535 to 554; it reads FKMKMSVVLGIIHMTFGVAL. Residues 555 to 572 lie on the Cytoplasmic side of the membrane; it reads SLLNHIYFKKPLNIYLGF. Residues 573–593 form a helical membrane-spanning segment; that stretch reads IPEMIFMTTLFGYLVILIIYK. Residues 594–638 are Vacuolar-facing; sequence WCAYDASTSMVAPSLLIHFINMFLFSYQDTSLPMLYKGQMGLQCF. A helical transmembrane segment spans residues 639–658; it reads LVVCAIICVPWMLVVKPLIL. The Cytoplasmic segment spans residues 659 to 724; the sequence is RRQYLRRKHL…DTVVHQAIHT (66 aa). Residues 725–749 form a helical membrane-spanning segment; sequence IEYCLGCISNTASYLRLWALSLAHA. Residues 750–770 are Vacuolar-facing; that stretch reads QLSEVLWTMVMHVGLSIRSLG. Residues 771–809 traverse the membrane as a helical segment; the sequence is GGIALVFVFSAFATLTIAILLIMEGLSAFLHALRLHWVE. At 810 to 837 the chain is on the cytoplasmic side; it reads FQNKFYMGTGFKFLPFSFENIREGKFDE.

This sequence belongs to the V-ATPase 116 kDa subunit family. In terms of assembly, V-ATPase is a heteromultimeric enzyme made up of two complexes: the ATP-hydrolytic V1 complex and the proton translocation V0 complex. The V1 complex consists of three catalytic AB heterodimers that form a heterohexamer, three peripheral stalks each consisting of EG heterodimers, one central rotor including subunits D and F, and the regulatory subunits C and H. The proton translocation complex V0 consists of the proton transport subunit a, a ring of proteolipid subunits c9c'', rotary subunit d, subunits e and f, and two accessory subunits.

It localises to the cytoplasmic vesicle. The protein resides in the clathrin-coated vesicle membrane. Its subcellular location is the secretory vesicle. It is found in the synaptic vesicle membrane. The protein localises to the melanosome. Its function is as follows. Subunit of the V0 complex of vacuolar(H+)-ATPase (V-ATPase), a multisubunit enzyme composed of a peripheral complex (V1) that hydrolyzes ATP and a membrane integral complex (V0) that translocates protons. V-ATPase is responsible for acidifying and maintaining the pH of intracellular compartments and in some cell types, is targeted to the plasma membrane, where it is responsible for acidifying the extracellular environment. Required for assembly and activity of the vacuolar ATPase. This is V-type proton ATPase 116 kDa subunit a 1 (atp6v0a1) from Xenopus tropicalis (Western clawed frog).